Reading from the N-terminus, the 229-residue chain is MQRLAKLISNAGICSRRDAEKLILDGQVKVNGIIVTSPATNVDTDNQVEVSGSLITSSQKSRLWIYYKPVGLITTHKDPLSRKTVFEQLTGLPRVISIGRLDLNSEGLLLLTNNGDLARQFELPSSKLKRVYHVRAYGNPDPLLKSNYKNLEIDGIFYNPQSIKLLRKNSTNSWLEVILFEGKNREIRRIFEHFGLKVNKLIRTEYGDFKLDNLKPNEYREVTKKLYKC.

Positions 2-69 constitute an S4 RNA-binding domain; that stretch reads QRLAKLISNA…KSRLWIYYKP (68 aa). D102 (nucleophile) is an active-site residue.

Belongs to the pseudouridine synthase RsuA family.

The catalysed reaction is a uridine in RNA = a pseudouridine in RNA. This is an uncharacterized protein from Rickettsia bellii (strain RML369-C).